The following is a 179-amino-acid chain: Acireductone dioxygenase (179 aa).

Fe(2+)-binding residues include His-85, His-87, Glu-91, and His-132. Positions 85, 87, 91, and 132 each coordinate Ni(2+).

Belongs to the acireductone dioxygenase (ARD) family. Requires Fe(2+) as cofactor. Ni(2+) is required as a cofactor.

The protein localises to the cytoplasm. It is found in the nucleus. It carries out the reaction 1,2-dihydroxy-5-(methylsulfanyl)pent-1-en-3-one + O2 = 4-methylsulfanyl-2-oxobutanoate + formate + 2 H(+). It catalyses the reaction 1,2-dihydroxy-5-(methylsulfanyl)pent-1-en-3-one + O2 = 3-(methylsulfanyl)propanoate + CO + formate + 2 H(+). Its pathway is amino-acid biosynthesis; L-methionine biosynthesis via salvage pathway; L-methionine from S-methyl-5-thio-alpha-D-ribose 1-phosphate: step 5/6. Catalyzes 2 different reactions between oxygen and the acireductone 1,2-dihydroxy-3-keto-5-methylthiopentene (DHK-MTPene) depending upon the metal bound in the active site. Fe-containing acireductone dioxygenase (Fe-ARD) produces formate and 2-keto-4-methylthiobutyrate (KMTB), the alpha-ketoacid precursor of methionine in the methionine recycle pathway. Ni-containing acireductone dioxygenase (Ni-ARD) produces methylthiopropionate, carbon monoxide and formate, and does not lie on the methionine recycle pathway. The chain is Acireductone dioxygenase from Saccharomyces cerevisiae (strain ATCC 204508 / S288c) (Baker's yeast).